The following is a 1000-amino-acid chain: Integrin alpha-PS5 (1000 aa).

FG-GAP repeat units lie at residues 15-74 (KHLK…GSCS), 75-137 (HYVL…DTPP), 145-198 (SLIP…AAQG), 199-261 (SYAV…GEIV), 262-323 (RKLH…FKFE), 324-379 (KKII…GLRD), and 386-448 (DAPS…SESR). Residue Asn-58 is glycosylated (N-linked (GlcNAc...) asparagine). The N-linked (GlcNAc...) asparagine glycan is linked to Asn-231. N-linked (GlcNAc...) asparagine glycosylation is found at Asn-516, Asn-592, Asn-622, Asn-732, Asn-771, Asn-829, Asn-842, Asn-853, and Asn-922. Residues 930–950 (IWYIILSLIAGHLLLGAMTYI) traverse the membrane as a helical segment. The Cytoplasmic portion of the chain corresponds to 951–1000 (LYKLRFFKRGKKEELKRLLEEHRSETKEPATDCEGNQEEINVEMHSDLEN). Residues 971–980 (EHRSETKEPA) show a composition bias toward basic and acidic residues. Residues 971–1000 (EHRSETKEPATDCEGNQEEINVEMHSDLEN) form a disordered region.

This sequence belongs to the integrin alpha chain family. In terms of assembly, heterodimer of an alpha and a beta subunit. Alpha-PS5 associates with beta-PS. In terms of tissue distribution, expressed in all follicle cells overlying the oocyte during mid-oogenesis, the strongest expression is observed in the cells covering the anterior end of the oocyte and in the cells forming the dorsal appendages. After completion of oocyte enlargement, expression in main body follicle cells is down-regulated but persists strongly in the dorsal appendage forming cells. Expressed in lamellocytes.

It localises to the membrane. Functionally, possible role in cell-cell interactions. Minor involvement in the establishment of the oocyte anterior-posterior length. The polypeptide is Integrin alpha-PS5 (Drosophila melanogaster (Fruit fly)).